A 365-amino-acid chain; its full sequence is Putative F-box/kelch-repeat protein At3g16880 (365 aa).

Residues 1–47 form the F-box domain; the sequence is MTKMSKLPNDLLEEILSRSPLYSMRAIRLTCKKWNTLAKEESFTKKQ. Kelch repeat units follow at residues 98–149 and 155–205; these read RVYH…TKKS and ILSS…VKGN.

The chain is Putative F-box/kelch-repeat protein At3g16880 from Arabidopsis thaliana (Mouse-ear cress).